Here is a 446-residue protein sequence, read N- to C-terminus: WD repeat domain phosphoinositide-interacting protein 1 (446 aa).

A Nuclear receptor interaction motif is present at residues Leu131–Leu136. One copy of the WD 1 repeat lies at Ala184–Glu224. The L/FRRG motif motif lies at Phe225–Gly228. WD repeat units follow at residues Lys230–Pro269 and Ser312–Cys351. The disordered stretch occupies residues Ala386–Leu406.

Belongs to the WD repeat PROPPIN family. In terms of assembly, interacts with androgen receptor (AR) and the estrogen receptors ESR1 and ESR2. Interacts with WIPI2. Interacts with WDR45. Interacts with ATG16L1. May interact with NUDC.

It is found in the golgi apparatus. Its subcellular location is the trans-Golgi network. The protein resides in the endosome. The protein localises to the cytoplasmic vesicle. It localises to the clathrin-coated vesicle. It is found in the preautophagosomal structure membrane. Its subcellular location is the cytoplasm. The protein resides in the cytoskeleton. Component of the autophagy machinery that controls the major intracellular degradation process by which cytoplasmic materials are packaged into autophagosomes and delivered to lysosomes for degradation. Plays an important role in starvation- and calcium-mediated autophagy, as well as in mitophagy. Functions downstream of the ULK1 and PI3-kinases that produce phosphatidylinositol 3-phosphate (PtdIns3P) on membranes of the endoplasmic reticulum once activated. Binds phosphatidylinositol 3-phosphate (PtdIns3P), and maybe other phosphoinositides including PtdIns3,5P2 and PtdIns5P, and is recruited to phagophore assembly sites at the endoplasmic reticulum membranes. There, it assists WIPI2 in the recruitment of ATG12-ATG5-ATG16L1, a complex that directly controls the elongation of the nascent autophagosomal membrane. Together with WDR45/WIPI4, promotes ATG2 (ATG2A or ATG2B)-mediated lipid transfer by enhancing ATG2-association with phosphatidylinositol 3-monophosphate (PI3P)-containing membranes. Involved in xenophagy of Staphylococcus aureus. Invading S.aureus cells become entrapped in autophagosome-like WIPI1 positive vesicles targeted for lysosomal degradation. Also plays a distinct role in controlling the transcription of melanogenic enzymes and melanosome maturation, a process that is distinct from starvation-induced autophagy. May also regulate the trafficking of proteins involved in the mannose-6-phosphate receptor (MPR) recycling pathway. The polypeptide is WD repeat domain phosphoinositide-interacting protein 1 (Wipi1) (Mus musculus (Mouse)).